Reading from the N-terminus, the 159-residue chain is Adult-specific rigid cuticular protein 15.7 (159 aa).

The 67-residue stretch at 23-89 folds into the Chitin-binding type R&amp;R domain; the sequence is LGNYAFNYGI…SIKTNEPGTA (67 aa).

Its function is as follows. Component of the rigid cuticle of the spider. In Araneus diadematus (European garden spider), this protein is Adult-specific rigid cuticular protein 15.7.